Reading from the N-terminus, the 329-residue chain is DNA-directed RNA polymerase subunit alpha (329 aa).

Residues 1–234 form an alpha N-terminal domain (alpha-NTD) region; sequence MQGSVTEFLK…EQLDAFVELR (234 aa). Residues 248-329 form an alpha C-terminal domain (alpha-CTD) region; that stretch reads FDPILLRPVD…WPPASLADDL (82 aa).

This sequence belongs to the RNA polymerase alpha chain family. As to quaternary structure, homodimer. The RNAP catalytic core consists of 2 alpha, 1 beta, 1 beta' and 1 omega subunit. When a sigma factor is associated with the core the holoenzyme is formed, which can initiate transcription.

The enzyme catalyses RNA(n) + a ribonucleoside 5'-triphosphate = RNA(n+1) + diphosphate. In terms of biological role, DNA-dependent RNA polymerase catalyzes the transcription of DNA into RNA using the four ribonucleoside triphosphates as substrates. This Shewanella loihica (strain ATCC BAA-1088 / PV-4) protein is DNA-directed RNA polymerase subunit alpha.